The following is a 203-amino-acid chain: Small ribosomal subunit protein uS4c (203 aa).

A disordered region spans residues 17 to 39; it reads TLPGLTTKKSNKLNRPGKDGNTD. Residues 92 to 164 enclose the S4 RNA-binding domain; sequence MRLDTLCFTL…IKNNQVREIP (73 aa).

It belongs to the universal ribosomal protein uS4 family. As to quaternary structure, part of the 30S ribosomal subunit. Contacts protein S5. The interaction surface between S4 and S5 is involved in control of translational fidelity.

It is found in the plastid. The protein localises to the chloroplast. In terms of biological role, one of the primary rRNA binding proteins, it binds directly to 16S rRNA where it nucleates assembly of the body of the 30S subunit. Its function is as follows. With S5 and S12 plays an important role in translational accuracy. In Phaeodactylum tricornutum (strain CCAP 1055/1), this protein is Small ribosomal subunit protein uS4c (rps4).